A 794-amino-acid chain; its full sequence is MALISQSIKNLKGGISQQPDILRYPDQGSRQVNGWSSETEGLQKRPPLVFLNTLGDNGALGQAPYIHLINRDEHEQYYAVFTGSGIRVFDLSGNEKQVRYPNGSNYIKTANPRNDLRMVTVADYTFIVNRNVVAQKNTKSVNLPNYNPNQDGLINVRGGQYGRELIVHINGKDVAKYKIPDGSQPEHVNNTDAQWLAEELAKQMRTNLSDWTVNVGQGFIHVTAPSGQQIDSFTTKDGYADQLINPVTHYAQSFSKLPPNAPNGYMVKIVGDASKSADQYYVRYDAERKVWTETLGWNTEDQVLWETMPHALVRAADGNFDFKWLEWSPKSCGDVDTNPWPSFVGSSINDVFFFRNRLGFLSGENIILSRTAKYFNFYPASIANLSDDDPIDVAVSTNRIAILKYAVPFSEELLIWSDEAQFVLTASGTLTSKSVELNLTTQFDVQDRARPFGIGRNVYFASPRSSFTSIHRYYAVQDVSSVKNAEDITSHVPNYIPNGVFSICGSGTENFCSVLSHGDPSKIFMYKFLYLNEELRQQSWSHWDFGENVQVLACQSISSDMYVILRNEFNTFLARISFTKNAIDLQGEPYRAFMDMKIRYTIPSGTYNDDTFTTSIHIPTIYGANFGRGKITVLEPDGKITVFEQPTAGWNSDPWLRLSGNLEGRMVYIGFNINFVYEFSKFLIKQTADDGSTSTEDIGRLQLRRAWVNYENSGTFDIYVENQSSNWKYTMAGARLGSNTLRAGRLNLGTGQYRFPVVGNAKFNTVYILSDETTPLNIIGCGWEGNYLRRSSGI.

As to quaternary structure, interacts with head-to-tail connector protein gp8, the tail component gp11, and the fiber protein gp17.

The protein resides in the virion. In terms of biological role, structural component of the short non-contractile tail. The tail complex is involved in viral genome delivery. Forms the end of the tail, including the canonical tube, the nozzle, and the small extensions below the fibers. Once the tail tubular structure is formed, the interface between gp11 and gp12 generates the proper environment to interact with the six gp17 trimers. The sequence is that of Tail tubular protein gp12 from Escherichia coli (Bacteriophage T7).